The primary structure comprises 134 residues: MDSRTGELITAPQAENGVFIWEINNPLYFKITEHSQRPFLMNHDIISIQIRFNHNIRKVMGIHKCFLDFRIWTTLQPQTGHFLRVFRYEVLKYLDSLGVISINNVIRAVDHVLYDVLENTINVTETHDIKYKFY.

This sequence belongs to the geminiviridae replication enhancer protein family. As to quaternary structure, homooligomer. Interacts with the replication-associated protein (REP). Interacts with host proliferating cell nuclear antigen (PCNA). Interacts with host retinoblastoma-related protein 1 (RBR1), and may thereby deregulate the host cell cycle. Oligomerization and interaction with PCNA are necessary for optimal replication enhancement.

Its function is as follows. Increases viral DNA accumulation. Enhances infectivity and symptom expression. In Cynanchum acutum (Little mallow), this protein is Replication enhancer protein.